A 471-amino-acid polypeptide reads, in one-letter code: Lincomycin resistance protein LmrB (471 aa).

12 helical membrane-spanning segments follow: residues 13 to 35 (PIPI…TALN), 55 to 77 (LTTG…LQWF), 84 to 106 (FTAV…FAML), 111 to 133 (VVQA…LIFP), 140 to 162 (AMGM…SGLI), 167 to 189 (TWNW…GMKF), 201 to 223 (IDIL…FSSA), 227 to 249 (GWGS…LFVW), 269 to 291 (FTLG…ILLP), 329 to 351 (AYGP…FFLT), 358 to 380 (SALT…MMPA), and 445 to 467 (GIQN…SLFI).

Belongs to the major facilitator superfamily. EmrB family.

Its subcellular location is the cell membrane. Functionally, proton-dependent transporter. May mediate the efflux of lincomycin. This Listeria monocytogenes serovar 1/2a (strain ATCC BAA-679 / EGD-e) protein is Lincomycin resistance protein LmrB (lmrB).